The sequence spans 37 residues: Calcitonin gene-related peptide (37 aa).

The cysteines at positions 2 and 7 are disulfide-linked. F37 carries the post-translational modification Phenylalanine amide.

The protein belongs to the calcitonin family.

Its function is as follows. CGRP induces vasodilation. It dilates a variety of vessels including the coronary, cerebral and systemic vasculature. Its abundance in the CNS also points toward a neurotransmitter or neuromodulator role. The protein is Calcitonin gene-related peptide of Pelophylax ridibundus (Marsh frog).